The sequence spans 391 residues: ATP phosphoribosyltransferase regulatory subunit (391 aa).

This sequence belongs to the class-II aminoacyl-tRNA synthetase family. HisZ subfamily. As to quaternary structure, heteromultimer composed of HisG and HisZ subunits.

It is found in the cytoplasm. It participates in amino-acid biosynthesis; L-histidine biosynthesis; L-histidine from 5-phospho-alpha-D-ribose 1-diphosphate: step 1/9. In terms of biological role, required for the first step of histidine biosynthesis. May allow the feedback regulation of ATP phosphoribosyltransferase activity by histidine. This is ATP phosphoribosyltransferase regulatory subunit from Prochlorococcus marinus (strain SARG / CCMP1375 / SS120).